The chain runs to 455 residues: Guanine/hypoxanthine permease GhxQ (455 aa).

Residues 1 to 31 lie on the Cytoplasmic side of the membrane; that stretch reads MSGDILQTPDAPKPQGALDNYFKITARGSTV. The helical transmembrane segment at 32–55 threads the bilayer; sequence RQEVLAGLTTFLAMVYSVIVVPGM. At 56 to 65 the chain is on the periplasmic side; that stretch reads LGKAGFPPAA. Residues 66-84 traverse the membrane as a helical segment; the sequence is VFVATCLVAGFGSLLMGLW. Residues 85–86 are Cytoplasmic-facing; that stretch reads AN. The chain crosses the membrane as a discontinuously helical span at residues 87–103; that stretch reads LPMAIGCAISLTAFTAF. The Periplasmic segment spans residues 104-115; that stretch reads SLVLGQQISVPV. Residues 116–135 form a helical membrane-spanning segment; it reads ALGAVFLMGVIFTAISVTGV. Residues 136-147 are Cytoplasmic-facing; it reads RTWILRNLPMGI. The chain crosses the membrane as a helical span at residues 148–168; sequence AHGTGIGIGLFLLLIAANGVG. Residues 169–186 are Periplasmic-facing; the sequence is MVIKNPIEGLPVALGAFT. A helical membrane pass occupies residues 187-204; the sequence is SFPVMMSLLGLAVIFGLE. Residues 205–208 lie on the Cytoplasmic side of the membrane; it reads KCRV. The helical transmembrane segment at 209-228 threads the bilayer; that stretch reads PGGILLVIIAISIIGLIFDP. The Periplasmic segment spans residues 229-260; that stretch reads AVKYHGLVAMPSLTGEDGKSLIFSLDIMGALQ. A helical membrane pass occupies residues 261–289; sequence PTVLPSVLALVMTAVFDATGTIRAVAGQA. Residues 290 to 302 lie on the Cytoplasmic side of the membrane; the sequence is NLLDKDNQIINGG. Residues 303–318 form a helical membrane-spanning segment; it reads KALTSDSVSSIFSGLV. Residues 319–320 lie on the Periplasmic side of the membrane; the sequence is GA. The discontinuously helical transmembrane segment at 321–336 threads the bilayer; sequence APAAVYIESAAGTAAG. The Cytoplasmic portion of the chain corresponds to 337–340; that stretch reads GKTG. The chain crosses the membrane as a helical span at residues 341–355; sequence LTATVVGALFLLILF. The Periplasmic segment spans residues 356–366; that stretch reads LSPLSFLIPGY. A helical membrane pass occupies residues 367 to 386; sequence ATAPALMYVGLLMLSNVSKL. Over 387–391 the chain is Cytoplasmic; sequence DFNDF. An intramembrane region (discontinuously helical) is located at residues 392–427; the sequence is IDAMAGLVCAVFIVLTCNIVTGIMLGFVTLVVGRVF. The Cytoplasmic segment spans residues 428-455; sequence AREWQKLNIGTVIITAALVAFYAGGWAI.

The protein belongs to the nucleobase:cation symporter-2 (NCS2) (TC 2.A.40) family. Azg-like subfamily.

It is found in the cell membrane. Functionally, high-affinity transporter for guanine and hypoxanthine. This is Guanine/hypoxanthine permease GhxQ (ghxQ) from Escherichia coli (strain K12).